A 228-amino-acid polypeptide reads, in one-letter code: Carboxylesterase SOBER1 (228 aa).

Catalysis depends on charge relay system residues serine 106, aspartate 160, and histidine 192.

This sequence belongs to the AB hydrolase superfamily. AB hydrolase 2 family.

Possesses carboxylesterase activity in vitro with a preference for short acyl chain substrates. Functions as a negative regulator of the hypersensitive response (HR) triggered by the bacterial type III effector protein AvrBsT. Possesses phospholipase A2 (PLA2) activity and hydrolyzes phosphatidylcholine (PC), a lipid that is hydrolyzed by phospholipase D (PLD) to produce phosphatidic acid (PA). Required to suppress AvrBsT-dependent HR and PLD-dependent production of PA in response to AvrBsT elicitation. The sequence is that of Carboxylesterase SOBER1 from Arabidopsis thaliana (Mouse-ear cress).